The chain runs to 1257 residues: Phosphatidylinositol 3,4,5-trisphosphate 5-phosphatase 2 (1257 aa).

Residues 21 to 117 form the SH2 domain; the sequence is WYHRDLSRAA…GLVCALLLPV (97 aa). Residues 119 to 132 are compositionally biased toward basic and acidic residues; that stretch reads GEREPDPPDDRDAS. Residues 119–181 are disordered; the sequence is GEREPDPPDD…ESTPNGLSTV (63 aa). Serine 132 is subject to Phosphoserine. The span at 156-166 shows a compositional bias: pro residues; that stretch reads PSSPLPTPETP. Position 165 is a phosphothreonine (threonine 165). Phosphoserine occurs at positions 241 and 353. Tyrosine 887 is modified (phosphotyrosine). Serine 891 bears the Phosphoserine mark. The disordered stretch occupies residues 897–986; sequence TGAKSKVPSV…PPKNSFNNPA (90 aa). Positions 939-951 are enriched in pro residues; it reads PPPTGRPPAPPRA. Positions 945-950 match the SH3-binding motif; that stretch reads PPAPPR. A compositionally biased stretch (basic and acidic residues) spans 952–966; the sequence is VPREEPLNPRLKSEG. The short motif at 984 to 987 is the NPXY motif element; that stretch reads NPAY. Tyrosine 987 is subject to Phosphotyrosine. A compositionally biased stretch (low complexity) spans 999-1008; it reads PLEPPSLARA. Residues 999–1119 are disordered; the sequence is PLEPPSLARA…FLGEVASGDD (121 aa). Pro residues-rich tracts occupy residues 1049-1060 and 1088-1104; these read LPPPDFPPPPLP and GPPPPKAHPRPPLPPGT. A Phosphoserine modification is found at serine 1132. Positions 1134-1196 are disordered; it reads VDYAPGPGRS…PQGGRASGLG (63 aa). A phosphotyrosine mark is found at tyrosine 1136 and tyrosine 1161. Residues 1195–1257 form the SAM domain; the sequence is LGEAGMGAWL…LLLDTLQLSK (63 aa). Position 1256 is a phosphoserine (serine 1256).

It belongs to the inositol 1,4,5-trisphosphate 5-phosphatase family. Interacts with tyrosine phosphorylated form of SHC1. Interacts with EGFR. Upon stimulation by the EGF signaling pathway, it forms a complex with SHC1 and EGFR. Interacts with cytoskeletal protein SORBS3/vinexin, promoting its localization to the periphery of cells. Forms a complex with filamin (FLNA or FLNB), actin, GPIb (GP1BA or GP1BB) that regulates cortical and submembraneous actin. Interacts with c-Met/MET, when c-Met/MET is phosphorylated on 'Tyr-1356'. Interacts with p130Cas/BCAR1. Interacts with CENTD3/ARAP3 via its SAM domain. Interacts with c-Cbl/CBL and CAP/SORBS1. Interacts with activated EPHA2 receptor. Interacts with receptors FCGR2A. Interacts with FCGR2B. Interacts with tyrosine kinase ABL1. Interacts with tyrosine kinase TEC. Interacts with CSF1R. Interacts (via N-terminus) with SH3YL1 (via SH3 domain). Interacts (via SH2 domain) with tyrosine phosphorylated KLRC1 (via ITIM). Interacts with NEDD9/HEF1. Tyrosine phosphorylated by the members of the SRC family after exposure to a diverse array of extracellular stimuli such as insulin, growth factors such as EGF or PDGF, chemokines, integrin ligands and hypertonic and oxidative stress. May be phosphorylated upon IgG receptor FCGR2B-binding. Phosphorylated at Tyr-987 following cell attachment and spreading. Phosphorylated at Tyr-1161 following EGF signaling pathway stimulation. As to expression, widely expressed.

It localises to the cytoplasm. The protein resides in the cytosol. The protein localises to the cytoskeleton. It is found in the membrane. Its subcellular location is the cell projection. It localises to the filopodium. The protein resides in the lamellipodium. The protein localises to the basal cell membrane. It is found in the nucleus. Its subcellular location is the nucleus speckle. It localises to the spindle pole. It carries out the reaction a 1,2-diacyl-sn-glycero-3-phospho-(1D-myo-inositol-3,4,5-trisphosphate) + H2O = a 1,2-diacyl-sn-glycero-3-phospho-(1D-myo-inositol-3,4-bisphosphate) + phosphate. It catalyses the reaction 1,2-dioctanoyl-sn-glycero-3-phospho-(1D-myo-inositol-3,4,5-trisphosphate) + H2O = 1,2-dioctanoyl-sn-glycero-3-phospho-(1D-myo-inositol-3,4-bisphosphate) + phosphate. The enzyme catalyses 1,2-dihexadecanoyl-sn-glycero-3-phospho-(1D-myo-inositol-3,4,5-trisphosphate) + H2O = 1,2-dihexadecanoyl-sn-glycero-3-phospho-(1D-myo-inositol-3,4-bisphosphate) + phosphate. With respect to regulation, activated upon translocation to the sites of synthesis of PtdIns(3,4,5)P3 in the membrane. Enzymatic activity is enhanced in the presence of phosphatidylserine. Functionally, phosphatidylinositol (PtdIns) phosphatase that specifically hydrolyzes the 5-phosphate of phosphatidylinositol-3,4,5-trisphosphate (PtdIns(3,4,5)P3) to produce PtdIns(3,4)P2, thereby negatively regulating the PI3K (phosphoinositide 3-kinase) pathways. Required for correct mitotic spindle orientation and therefore progression of mitosis. Plays a central role in regulation of PI3K-dependent insulin signaling, although the precise molecular mechanisms and signaling pathways remain unclear. While overexpression reduces both insulin-stimulated MAP kinase and Akt activation, its absence does not affect insulin signaling or GLUT4 trafficking. Confers resistance to dietary obesity. May act by regulating AKT2, but not AKT1, phosphorylation at the plasma membrane. Part of a signaling pathway that regulates actin cytoskeleton remodeling. Required for the maintenance and dynamic remodeling of actin structures as well as in endocytosis, having a major impact on ligand-induced EGFR internalization and degradation. Participates in regulation of cortical and submembraneous actin by hydrolyzing PtdIns(3,4,5)P3 thereby regulating membrane ruffling. Regulates cell adhesion and cell spreading. Required for HGF-mediated lamellipodium formation, cell scattering and spreading. Acts as a negative regulator of EPHA2 receptor endocytosis by inhibiting via PI3K-dependent Rac1 activation. Acts as a regulator of neuritogenesis by regulating PtdIns(3,4,5)P3 level and is required to form an initial protrusive pattern, and later, maintain proper neurite outgrowth. Acts as a negative regulator of the FC-gamma-RIIA receptor (FCGR2A). Mediates signaling from the FC-gamma-RIIB receptor (FCGR2B), playing a central role in terminating signal transduction from activating immune/hematopoietic cell receptor systems. Upon stimulation by EGF, it is recruited by EGFR and dephosphorylates PtdIns(3,4,5)P3. Plays a negative role in regulating the PI3K-PKB pathway, possibly by inhibiting PKB activity. Down-regulates Fc-gamma-R-mediated phagocytosis in macrophages independently of INPP5D/SHIP1. In macrophages, down-regulates NF-kappa-B-dependent gene transcription by regulating macrophage colony-stimulating factor (M-CSF)-induced signaling. Plays a role in the localization of AURKA and NEDD9/HEF1 to the basolateral membrane at interphase in polarized cysts, thereby mediates cell cycle homeostasis, cell polarization and cilia assembly. Additionally promotion of cilia growth is also facilitated by hydrolysis of (PtdIns(3,4,5)P3) to PtdIns(3,4)P2. Promotes formation of apical membrane-initiation sites during the initial stages of lumen formation via Rho family-induced actin filament organization and CTNNB1 localization to cell-cell contacts. May also hydrolyze PtdIns(1,3,4,5)P4, and could thus affect the levels of the higher inositol polyphosphates like InsP6. Involved in endochondral ossification. This chain is Phosphatidylinositol 3,4,5-trisphosphate 5-phosphatase 2, found in Mus musculus (Mouse).